The chain runs to 326 residues: N-acetyl-gamma-glutamyl-phosphate reductase (326 aa).

The active site involves Cys-155.

It belongs to the NAGSA dehydrogenase family. Type 1 subfamily.

It is found in the cytoplasm. The enzyme catalyses N-acetyl-L-glutamate 5-semialdehyde + phosphate + NADP(+) = N-acetyl-L-glutamyl 5-phosphate + NADPH + H(+). It functions in the pathway amino-acid biosynthesis; L-arginine biosynthesis; N(2)-acetyl-L-ornithine from L-glutamate: step 3/4. In terms of biological role, catalyzes the NADPH-dependent reduction of N-acetyl-5-glutamyl phosphate to yield N-acetyl-L-glutamate 5-semialdehyde. The chain is N-acetyl-gamma-glutamyl-phosphate reductase from Shewanella woodyi (strain ATCC 51908 / MS32).